The chain runs to 398 residues: NADH-quinone oxidoreductase subunit D (398 aa).

It belongs to the complex I 49 kDa subunit family. As to quaternary structure, NDH-1 is composed of 14 different subunits. Subunits NuoB, C, D, E, F, and G constitute the peripheral sector of the complex.

The protein localises to the cell inner membrane. The catalysed reaction is a quinone + NADH + 5 H(+)(in) = a quinol + NAD(+) + 4 H(+)(out). Functionally, NDH-1 shuttles electrons from NADH, via FMN and iron-sulfur (Fe-S) centers, to quinones in the respiratory chain. The immediate electron acceptor for the enzyme in this species is believed to be ubiquinone. Couples the redox reaction to proton translocation (for every two electrons transferred, four hydrogen ions are translocated across the cytoplasmic membrane), and thus conserves the redox energy in a proton gradient. This is NADH-quinone oxidoreductase subunit D from Bradyrhizobium sp. (strain BTAi1 / ATCC BAA-1182).